The following is a 253-amino-acid chain: Tryptophan synthase alpha chain (253 aa).

Active-site proton acceptor residues include Glu-47 and Asp-58.

This sequence belongs to the TrpA family. As to quaternary structure, tetramer of two alpha and two beta chains.

It carries out the reaction (1S,2R)-1-C-(indol-3-yl)glycerol 3-phosphate + L-serine = D-glyceraldehyde 3-phosphate + L-tryptophan + H2O. Its pathway is amino-acid biosynthesis; L-tryptophan biosynthesis; L-tryptophan from chorismate: step 5/5. Functionally, the alpha subunit is responsible for the aldol cleavage of indoleglycerol phosphate to indole and glyceraldehyde 3-phosphate. The protein is Tryptophan synthase alpha chain of Lactococcus lactis subsp. cremoris (strain MG1363).